The following is an 83-amino-acid chain: Large ribosomal subunit protein eL43 (83 aa).

Cys-38, Cys-41, Cys-56, and Cys-59 together coordinate Zn(2+). The segment at Cys-38–Cys-59 adopts a C4-type zinc-finger fold.

This sequence belongs to the eukaryotic ribosomal protein eL43 family. Putative zinc-binding subfamily. As to quaternary structure, part of the 50S ribosomal subunit. Requires Zn(2+) as cofactor.

Its function is as follows. Binds to the 23S rRNA. The sequence is that of Large ribosomal subunit protein eL43 from Pyrococcus abyssi (strain GE5 / Orsay).